The primary structure comprises 79 residues: Schistosomin (79 aa).

In terms of processing, contains four disulfide bonds. Growth-controlling neurosecretory light green cells, in the cerebral ganglia of the CNS.

The protein localises to the secreted. Functionally, anti-gonadotropic neuropeptide. It also decreases the binding capacity of calfluxin to membrane-bound receptors of the albumen gland. This leads to inhibition of the reproductive activities of the infected snail. The polypeptide is Schistosomin (Lymnaea stagnalis (Great pond snail)).